The chain runs to 196 residues: uncharacterized protein (196 aa).

The helical transmembrane segment at 11–31 (ICGFLLVILTIGGVLGGVYLV) threads the bilayer.

The protein localises to the membrane. This is an uncharacterized protein from Mycoplasma genitalium (strain ATCC 33530 / DSM 19775 / NCTC 10195 / G37) (Mycoplasmoides genitalium).